Here is a 238-residue protein sequence, read N- to C-terminus: Large ribosomal subunit protein uL1 (238 aa).

Belongs to the universal ribosomal protein uL1 family. Part of the 50S ribosomal subunit.

Its function is as follows. Binds directly to 23S rRNA. The L1 stalk is quite mobile in the ribosome, and is involved in E site tRNA release. In terms of biological role, protein L1 is also a translational repressor protein, it controls the translation of the L11 operon by binding to its mRNA. The sequence is that of Large ribosomal subunit protein uL1 from Beutenbergia cavernae (strain ATCC BAA-8 / DSM 12333 / CCUG 43141 / JCM 11478 / NBRC 16432 / NCIMB 13614 / HKI 0122).